A 1471-amino-acid polypeptide reads, in one-letter code: Gag-Pol polyprotein (1471 aa).

G2 is lipidated: N-myristoyl glycine; by host. Residues V7 to L31 are interaction with Gp41. The Nuclear export signal signature appears at L16 to R22. A Nuclear localization signal motif is present at residues K26–K32. Positions Q105–K114 are enriched in basic and acidic residues. The segment at Q105–Y130 is disordered. Residue Y130 is modified to Phosphotyrosine; by host. Positions N186–Q223 are interaction with human PPIA/CYPA and NUP153. The interval Y274–M360 is dimerization/Multimerization of capsid protein p24. 2 CCHC-type zinc fingers span residues V388–A405 and Q409–E426. Residues A441 to R508 form a disordered region. Basic and acidic residues predominate over residues D484 to E501. Residues P513–L517 form a dimerization of protease region. Residues E533–L602 form the Peptidase A2 domain. The For protease activity; shared with dimeric partner role is filled by D537. Dimerization of protease regions lie at residues G561–N567 and N600–P612. In terms of domain architecture, Reverse transcriptase spans G656–W846. The Mg(2+) site is built by D721, D796, and D797. Residues F838–W846 are RT 'primer grip'. The Tryptophan repeat motif motif lies at W1008 to W1024. The RNase H type-1 domain occupies L1044–R1167. Mg(2+)-binding residues include D1053, E1088, D1108, and D1159. The Integrase-type zinc finger occupies E1173–Q1214. Zn(2+) is bound by residues H1182, H1186, C1210, and C1213. The 152-residue stretch at V1224–T1375 folds into the Integrase catalytic domain. Residues D1234, D1286, and E1322 each contribute to the Mg(2+) site. Residues F1393–H1440 constitute a DNA-binding region (integrase-type).

As to quaternary structure, homotrimer; further assembles as hexamers of trimers. Interacts with gp41 (via C-terminus). Interacts with host CALM1; this interaction induces a conformational change in the Matrix protein, triggering exposure of the myristate group. Interacts with host AP3D1; this interaction allows the polyprotein trafficking to multivesicular bodies during virus assembly. Part of the pre-integration complex (PIC) which is composed of viral genome, matrix protein, Vpr and integrase. Homodimer; the homodimer further multimerizes as homohexamers or homopentamers. Interacts with human PPIA/CYPA. Interacts with human NUP153. Interacts with host PDZD8; this interaction stabilizes the capsid. Interacts with monkey TRIM5; this interaction destabilizes the capsid. In terms of assembly, homodimer, whose active site consists of two apposed aspartic acid residues. As to quaternary structure, heterodimer of p66 RT and p51 RT (RT p66/p51). Heterodimerization of RT is essential for DNA polymerase activity. The overall folding of the subdomains is similar in p66 RT and p51 RT but the spatial arrangements of the subdomains are dramatically different. Homotetramer; may further associate as a homohexadecamer. Part of the pre-integration complex (PIC) which is composed of viral genome, matrix protein, Vpr and integrase. Interacts with human SMARCB1/INI1 and human PSIP1/LEDGF isoform 1. Interacts with human KPNA3; this interaction might play a role in nuclear import of the pre-integration complex. Interacts with human NUP153; this interaction might play a role in nuclear import of the pre-integration complex. The cofactor is Mg(2+). Specific enzymatic cleavages by the viral protease yield mature proteins. The protease is released by autocatalytic cleavage. The polyprotein is cleaved during and after budding, this process is termed maturation. Proteolytic cleavage of p66 RT removes the RNase H domain to yield the p51 RT subunit. Nucleocapsid protein p7 might be further cleaved after virus entry.

The protein localises to the host cell membrane. It is found in the host endosome. The protein resides in the host multivesicular body. It localises to the virion membrane. Its subcellular location is the host nucleus. The protein localises to the host cytoplasm. It is found in the virion. It catalyses the reaction Endopeptidase for which the P1 residue is preferably hydrophobic.. The enzyme catalyses Endohydrolysis of RNA in RNA/DNA hybrids. Three different cleavage modes: 1. sequence-specific internal cleavage of RNA. Human immunodeficiency virus type 1 and Moloney murine leukemia virus enzymes prefer to cleave the RNA strand one nucleotide away from the RNA-DNA junction. 2. RNA 5'-end directed cleavage 13-19 nucleotides from the RNA end. 3. DNA 3'-end directed cleavage 15-20 nucleotides away from the primer terminus.. The catalysed reaction is 3'-end directed exonucleolytic cleavage of viral RNA-DNA hybrid.. It carries out the reaction DNA(n) + a 2'-deoxyribonucleoside 5'-triphosphate = DNA(n+1) + diphosphate. Protease: The viral protease is inhibited by many synthetic protease inhibitors (PIs), such as amprenavir, atazanavir, indinavir, loprinavir, nelfinavir, ritonavir and saquinavir. Use of protease inhibitors in tritherapy regimens permit more ambitious therapeutic strategies. Reverse transcriptase/ribonuclease H: RT can be inhibited either by nucleoside RT inhibitors (NRTIs) or by non nucleoside RT inhibitors (NNRTIs). NRTIs act as chain terminators, whereas NNRTIs inhibit DNA polymerization by binding a small hydrophobic pocket near the RT active site and inducing an allosteric change in this region. Classical NRTIs are abacavir, adefovir (PMEA), didanosine (ddI), lamivudine (3TC), stavudine (d4T), tenofovir (PMPA), zalcitabine (ddC), and zidovudine (AZT). Classical NNRTIs are atevirdine (BHAP U-87201E), delavirdine, efavirenz (DMP-266), emivirine (I-EBU), and nevirapine (BI-RG-587). The tritherapies used as a basic effective treatment of AIDS associate two NRTIs and one NNRTI. Mediates, with Gag polyprotein, the essential events in virion assembly, including binding the plasma membrane, making the protein-protein interactions necessary to create spherical particles, recruiting the viral Env proteins, and packaging the genomic RNA via direct interactions with the RNA packaging sequence (Psi). Gag-Pol polyprotein may regulate its own translation, by the binding genomic RNA in the 5'-UTR. At low concentration, the polyprotein would promote translation, whereas at high concentration, the polyprotein would encapsidate genomic RNA and then shut off translation. In terms of biological role, targets the polyprotein to the plasma membrane via a multipartite membrane-binding signal, that includes its myristoylated N-terminus. Matrix protein is part of the pre-integration complex. Implicated in the release from host cell mediated by Vpu. Binds to RNA. Its function is as follows. Forms the conical core that encapsulates the genomic RNA-nucleocapsid complex in the virion. Most core are conical, with only 7% tubular. The core is constituted by capsid protein hexamer subunits. The core is disassembled soon after virion entry. Host restriction factors such as TRIM5-alpha or TRIMCyp bind retroviral capsids and cause premature capsid disassembly, leading to blocks in reverse transcription. Capsid restriction by TRIM5 is one of the factors which restricts HIV-1 to the human species. Host PIN1 apparently facilitates the virion uncoating. On the other hand, interactions with PDZD8 or CYPA stabilize the capsid. Functionally, encapsulates and protects viral dimeric unspliced genomic RNA (gRNA). Binds these RNAs through its zinc fingers. Acts as a nucleic acid chaperone which is involved in rearangement of nucleic acid secondary structure during gRNA retrotranscription. Also facilitates template switch leading to recombination. As part of the polyprotein, participates in gRNA dimerization, packaging, tRNA incorporation and virion assembly. Aspartyl protease that mediates proteolytic cleavages of Gag and Gag-Pol polyproteins during or shortly after the release of the virion from the plasma membrane. Cleavages take place as an ordered, step-wise cascade to yield mature proteins. This process is called maturation. Displays maximal activity during the budding process just prior to particle release from the cell. Also cleaves Nef and Vif, probably concomitantly with viral structural proteins on maturation of virus particles. Hydrolyzes host EIF4GI and PABP1 in order to shut off the capped cellular mRNA translation. The resulting inhibition of cellular protein synthesis serves to ensure maximal viral gene expression and to evade host immune response. In terms of biological role, multifunctional enzyme that converts the viral RNA genome into dsDNA in the cytoplasm, shortly after virus entry into the cell. This enzyme displays a DNA polymerase activity that can copy either DNA or RNA templates, and a ribonuclease H (RNase H) activity that cleaves the RNA strand of RNA-DNA heteroduplexes in a partially processive 3' to 5' endonucleasic mode. Conversion of viral genomic RNA into dsDNA requires many steps. A tRNA(3)-Lys binds to the primer-binding site (PBS) situated at the 5'-end of the viral RNA. RT uses the 3' end of the tRNA primer to perform a short round of RNA-dependent minus-strand DNA synthesis. The reading proceeds through the U5 region and ends after the repeated (R) region which is present at both ends of viral RNA. The portion of the RNA-DNA heteroduplex is digested by the RNase H, resulting in a ssDNA product attached to the tRNA primer. This ssDNA/tRNA hybridizes with the identical R region situated at the 3' end of viral RNA. This template exchange, known as minus-strand DNA strong stop transfer, can be either intra- or intermolecular. RT uses the 3' end of this newly synthesized short ssDNA to perform the RNA-dependent minus-strand DNA synthesis of the whole template. RNase H digests the RNA template except for two polypurine tracts (PPTs) situated at the 5'-end and near the center of the genome. It is not clear if both polymerase and RNase H activities are simultaneous. RNase H probably can proceed both in a polymerase-dependent (RNA cut into small fragments by the same RT performing DNA synthesis) and a polymerase-independent mode (cleavage of remaining RNA fragments by free RTs). Secondly, RT performs DNA-directed plus-strand DNA synthesis using the PPTs that have not been removed by RNase H as primers. PPTs and tRNA primers are then removed by RNase H. The 3' and 5' ssDNA PBS regions hybridize to form a circular dsDNA intermediate. Strand displacement synthesis by RT to the PBS and PPT ends produces a blunt ended, linear dsDNA copy of the viral genome that includes long terminal repeats (LTRs) at both ends. Its function is as follows. Catalyzes viral DNA integration into the host chromosome, by performing a series of DNA cutting and joining reactions. This enzyme activity takes place after virion entry into a cell and reverse transcription of the RNA genome in dsDNA. The first step in the integration process is 3' processing. This step requires a complex comprising the viral genome, matrix protein, Vpr and integrase. This complex is called the pre-integration complex (PIC). The integrase protein removes 2 nucleotides from each 3' end of the viral DNA, leaving recessed CA OH's at the 3' ends. In the second step, the PIC enters cell nucleus. This process is mediated through integrase and Vpr proteins, and allows the virus to infect a non dividing cell. This ability to enter the nucleus is specific of lentiviruses, other retroviruses cannot and rely on cell division to access cell chromosomes. In the third step, termed strand transfer, the integrase protein joins the previously processed 3' ends to the 5' ends of strands of target cellular DNA at the site of integration. The 5'-ends are produced by integrase-catalyzed staggered cuts, 5 bp apart. A Y-shaped, gapped, recombination intermediate results, with the 5'-ends of the viral DNA strands and the 3' ends of target DNA strands remaining unjoined, flanking a gap of 5 bp. The last step is viral DNA integration into host chromosome. This involves host DNA repair synthesis in which the 5 bp gaps between the unjoined strands are filled in and then ligated. Since this process occurs at both cuts flanking the HIV genome, a 5 bp duplication of host DNA is produced at the ends of HIV-1 integration. Alternatively, Integrase may catalyze the excision of viral DNA just after strand transfer, this is termed disintegration. The polypeptide is Gag-Pol polyprotein (gag-pol) (Human immunodeficiency virus type 2 subtype B (isolate UC1) (HIV-2)).